The chain runs to 232 residues: Large ribosomal subunit protein uL1 (232 aa).

It belongs to the universal ribosomal protein uL1 family. In terms of assembly, part of the 50S ribosomal subunit.

Its function is as follows. Binds directly to 23S rRNA. The L1 stalk is quite mobile in the ribosome, and is involved in E site tRNA release. Functionally, protein L1 is also a translational repressor protein, it controls the translation of the L11 operon by binding to its mRNA. The chain is Large ribosomal subunit protein uL1 from Syntrophus aciditrophicus (strain SB).